We begin with the raw amino-acid sequence, 143 residues long: Large ribosomal subunit protein uL11 (143 aa).

It belongs to the universal ribosomal protein uL11 family. Part of the ribosomal stalk of the 50S ribosomal subunit. Interacts with L10 and the large rRNA to form the base of the stalk. L10 forms an elongated spine to which L12 dimers bind in a sequential fashion forming a multimeric L10(L12)X complex. Post-translationally, one or more lysine residues are methylated.

Functionally, forms part of the ribosomal stalk which helps the ribosome interact with GTP-bound translation factors. In Burkholderia cenocepacia (strain HI2424), this protein is Large ribosomal subunit protein uL11.